Reading from the N-terminus, the 248-residue chain is 4-hydroxy-tetrahydrodipicolinate reductase (248 aa).

NAD(+) is bound by residues 9 to 14, 77 to 79, and 104 to 107; these read GAKGRV, GTT, and APNF. The Proton donor/acceptor role is filled by histidine 134. Histidine 135 is a binding site for (S)-2,3,4,5-tetrahydrodipicolinate. The active-site Proton donor is the lysine 138. 144–145 contacts (S)-2,3,4,5-tetrahydrodipicolinate; that stretch reads GT.

It belongs to the DapB family.

The protein localises to the cytoplasm. It catalyses the reaction (S)-2,3,4,5-tetrahydrodipicolinate + NAD(+) + H2O = (2S,4S)-4-hydroxy-2,3,4,5-tetrahydrodipicolinate + NADH + H(+). The enzyme catalyses (S)-2,3,4,5-tetrahydrodipicolinate + NADP(+) + H2O = (2S,4S)-4-hydroxy-2,3,4,5-tetrahydrodipicolinate + NADPH + H(+). It functions in the pathway amino-acid biosynthesis; L-lysine biosynthesis via DAP pathway; (S)-tetrahydrodipicolinate from L-aspartate: step 4/4. Functionally, catalyzes the conversion of 4-hydroxy-tetrahydrodipicolinate (HTPA) to tetrahydrodipicolinate. The polypeptide is 4-hydroxy-tetrahydrodipicolinate reductase (Corynebacterium aurimucosum (strain ATCC 700975 / DSM 44827 / CIP 107346 / CN-1) (Corynebacterium nigricans)).